Consider the following 527-residue polypeptide: MWTRRWIQFLVLCLHLWVTVEGYLGVFRGDVNETITLSCNNVTELTAWFKDNNSGVVLACDGENSSDGRFSRINGSSLVITMLQIQDEGNYSCSKCSEDKSSQAYIQLKVSSGPYNVLADISPTRTLPNGTIYTSVGSNLSFGCSSNSYPAPDLEIVLQRTDANPEPFPSIKGNNFLQFNLINVASNYQGNYTCSAVNPLSGRKLNSTRQLLVYRPPITSIKCYANNSLGFSKMLLSCSWPGGYPDPLLQWEQDGKIIANESFAANTKDTLVTYLNSSSLRVRQQFQCSGKHLSTKENNMKTCQIQIDLPLLESQPMRTCFTGENVTLSCSVSGAVPSATITWLRNISDPESDIQPGKKYLISQKDSLSYLTILNCSHEEDEGYYTCKAENVLGIKEINVWLTVNKPHNIVGLVTALLLLFLLVVAIITGTVLYCDPQIYLKANPFRSGATDVLVLVDSEDEENEEVFDTAESVQYTDIVPNVPPPAANGHLSKHEVMFHRPPESTSSDLFSEVSDDTGEENQNEEI.

An N-terminal signal peptide occupies residues 1–13; that stretch reads MWTRRWIQFLVLC. 4 Ig-like C2-type domains span residues 14 to 111, 123 to 212, 216 to 306, and 310 to 399; these read LHLW…LKVS, PTRT…RQLL, PPIT…CQIQ, and PLLE…KEIN. Topologically, residues 23–409 are extracellular; that stretch reads YLGVFRGDVN…VWLTVNKPHN (387 aa). Residues Asn-32, Asn-41, Asn-52, Asn-64, Asn-74, Asn-90, Asn-129, Asn-139, Asn-191, Asn-206, Asn-226, Asn-260, Asn-276, Asn-325, Asn-346, and Asn-375 are each glycosylated (N-linked (GlcNAc...) asparagine). Cys-144 and Cys-194 are oxidised to a cystine. A disulfide bond links Cys-238 and Cys-288. Cys-330 and Cys-387 form a disulfide bridge. The chain crosses the membrane as a helical span at residues 410–430; it reads IVGLVTALLLLFLLVVAIITG. Topologically, residues 431–527 are cytoplasmic; it reads TVLYCDPQIY…TGEENQNEEI (97 aa). Residues 501–527 form a disordered region; the sequence is RPPESTSSDLFSEVSDDTGEENQNEEI. Positions 514-527 are enriched in acidic residues; the sequence is VSDDTGEENQNEEI.

Its subcellular location is the membrane. In Xenopus laevis (African clawed frog), this protein is V-set and immunoglobulin domain-containing protein 10 (vsig10).